We begin with the raw amino-acid sequence, 363 residues long: Serine/threonine-protein kinase SRK2A (363 aa).

In terms of domain architecture, Protein kinase spans 4-260; the sequence is YELVKDIGAG…IAEIKKHSWF (257 aa). ATP-binding positions include 10–18 and Lys-33; that span reads IGAGNFGVA. Catalysis depends on Asp-123, which acts as the Proton acceptor. The interval 306–363 is disordered; sequence SRSIGGFGWGGNGDADGKEEDAEDVEEEEEEVEEEEDDEDEYDKTVKEVHASGEVRIS. The segment covering 310 to 319 has biased composition (gly residues); that stretch reads GGFGWGGNGD. Positions 322-347 are enriched in acidic residues; the sequence is GKEEDAEDVEEEEEEVEEEEDDEDEY. Residues 348-363 show a composition bias toward basic and acidic residues; the sequence is DKTVKEVHASGEVRIS.

This sequence belongs to the protein kinase superfamily. Ser/Thr protein kinase family. Interacts with TOPP1. As to expression, expressed in seedlings.

It carries out the reaction L-seryl-[protein] + ATP = O-phospho-L-seryl-[protein] + ADP + H(+). It catalyses the reaction L-threonyl-[protein] + ATP = O-phospho-L-threonyl-[protein] + ADP + H(+). In Arabidopsis thaliana (Mouse-ear cress), this protein is Serine/threonine-protein kinase SRK2A (SRK2A).